A 962-amino-acid chain; its full sequence is Protease 3 (962 aa).

Residues 1 to 23 (MPRSTWFKALLLLVALWAPLSQA) form the signal peptide. His88 provides a ligand contact to Zn(2+). The Proton acceptor role is filled by Glu91. Positions 92 and 169 each coordinate Zn(2+).

Belongs to the peptidase M16 family. In terms of assembly, monomer. It depends on Zn(2+) as a cofactor.

It localises to the periplasm. The enzyme catalyses Preferential cleavage of 16-Tyr-|-Leu-17 and 25-Phe-|-Tyr-26 bonds of oxidized insulin B chain. Also acts on other substrates of Mw less than 7 kDa such as insulin and glucagon.. In terms of biological role, endopeptidase that degrades small peptides of less than 7 kDa, such as glucagon and insulin. The chain is Protease 3 (ptrA) from Escherichia coli O157:H7.